A 243-amino-acid polypeptide reads, in one-letter code: Large ribosomal subunit protein uL2 (243 aa).

A compositionally biased stretch (basic residues) spans 1–12 (MGRRIQGQRRGR). Disordered stretches follow at residues 1–38 (MGRR…SDDT) and 198–243 (VDHP…GSSE). Composition is skewed to basic and acidic residues over residues 24-34 (YKAELSHKQSE) and 221-231 (PPGRKVGDIAS).

It belongs to the universal ribosomal protein uL2 family. In terms of assembly, part of the 50S ribosomal subunit. Forms a bridge to the 30S subunit in the 70S ribosome.

Functionally, one of the primary rRNA binding proteins. Required for association of the 30S and 50S subunits to form the 70S ribosome, for tRNA binding and peptide bond formation. It has been suggested to have peptidyltransferase activity; this is somewhat controversial. Makes several contacts with the 16S rRNA in the 70S ribosome. The protein is Large ribosomal subunit protein uL2 of Haloquadratum walsbyi (strain DSM 16790 / HBSQ001).